Reading from the N-terminus, the 192-residue chain is Nucleoside triphosphate pyrophosphatase (192 aa).

Asp73 functions as the Proton acceptor in the catalytic mechanism.

It belongs to the Maf family. A divalent metal cation serves as cofactor.

Its subcellular location is the cytoplasm. The catalysed reaction is a ribonucleoside 5'-triphosphate + H2O = a ribonucleoside 5'-phosphate + diphosphate + H(+). It carries out the reaction a 2'-deoxyribonucleoside 5'-triphosphate + H2O = a 2'-deoxyribonucleoside 5'-phosphate + diphosphate + H(+). In terms of biological role, nucleoside triphosphate pyrophosphatase. May have a dual role in cell division arrest and in preventing the incorporation of modified nucleotides into cellular nucleic acids. The chain is Nucleoside triphosphate pyrophosphatase from Ehrlichia canis (strain Jake).